A 162-amino-acid chain; its full sequence is Inorganic pyrophosphatase (162 aa).

E8 lines the Mg(2+) pocket. K16, R30, and Y42 together coordinate substrate. Residues D52, D57, D84, and D89 each coordinate Mg(2+). Residue D89 is the Proton acceptor of the active site. A substrate-binding site is contributed by Y126.

Belongs to the PPase family. As to quaternary structure, homohexamer. It depends on Mg(2+) as a cofactor.

It is found in the cytoplasm. The enzyme catalyses diphosphate + H2O = 2 phosphate + H(+). Its function is as follows. Catalyzes the hydrolysis of inorganic pyrophosphate (PPi) forming two phosphate ions. In Mycobacterium leprae (strain TN), this protein is Inorganic pyrophosphatase.